The chain runs to 516 residues: 3-ketoacyl-CoA synthase 4 (516 aa).

Transmembrane regions (helical) follow at residues 48–68 (LISN…SVEA) and 87–107 (LVSI…YVMT). Residues 104–393 (YVMTRPRPVY…FFMTLVVKKL (290 aa)) form the FAE domain. Active-site residues include Cys248, His327, His411, His415, His444, and Asn448.

Belongs to the thiolase-like superfamily. Chalcone/stilbene synthases family. In terms of tissue distribution, expressed at low levels in siliques, flowers, leaves and stems.

It localises to the membrane. It carries out the reaction a very-long-chain acyl-CoA + malonyl-CoA + H(+) = a very-long-chain 3-oxoacyl-CoA + CO2 + CoA. It participates in lipid metabolism; fatty acid biosynthesis. This is 3-ketoacyl-CoA synthase 4 from Arabidopsis thaliana (Mouse-ear cress).